A 265-amino-acid polypeptide reads, in one-letter code: MQPISIKDVESDQGKVYIVNALKDLVCKCLLEFVDIQIESFMYPDDPKCFTRIFKGNKIVNEASDKDSKVRSYPSSLGVGHSALFPLIYIRQKTNSLRFLNDPKQLPTPLVDDMNAKFKGIIKVYENLIHLYHSYQTVDCNNMNQQKLLGDLVSRGNFMLDILHGYVTIASTIVRDSKDANILIDTVNRFIHDTILFHKRIIHNSNAYTEYHVMKRGMQRNQSEETLVELEFRILDVSDVNLDNEFDDFLQHRKTSLKITHRRVI.

Phosphoserine is present on S223.

This is an uncharacterized protein from Saccharomyces cerevisiae (strain ATCC 204508 / S288c) (Baker's yeast).